Consider the following 119-residue polypeptide: MACSVVVALLALLSLSGLEAIQHAPKIQVYSRHPAENGKPNFLNCYVSGFHPSDIEVDLLKNGKKIEKVEHSDLSFSKDWSFYLLYYTEFTPNEKDEYACRVSHVTFSTPKTVKWDRNI.

An N-terminal signal peptide occupies residues 1 to 20; sequence MACSVVVALLALLSLSGLEA. Residues 25–114 enclose the Ig-like C1-type domain; it reads PKIQVYSRHP…VTFSTPKTVK (90 aa). A disulfide bond links Cys-45 and Cys-100.

This sequence belongs to the beta-2-microglobulin family. In terms of assembly, heterodimer of an alpha chain and a beta chain. Beta-2-microglobulin is the beta-chain of major histocompatibility complex class I molecules.

Its subcellular location is the secreted. In terms of biological role, component of the class I major histocompatibility complex (MHC). Involved in the presentation of peptide antigens to the immune system. The chain is Beta-2-microglobulin (B2M) from Mico emiliae (Emilia's marmoset).